Reading from the N-terminus, the 486-residue chain is Histidine--tRNA ligase, chloroplastic/mitochondrial (486 aa).

This sequence belongs to the class-II aminoacyl-tRNA synthetase family.

The protein resides in the plastid. It is found in the chloroplast. It localises to the mitochondrion. It catalyses the reaction tRNA(His) + L-histidine + ATP = L-histidyl-tRNA(His) + AMP + diphosphate + H(+). The sequence is that of Histidine--tRNA ligase, chloroplastic/mitochondrial from Arabidopsis thaliana (Mouse-ear cress).